A 274-amino-acid chain; its full sequence is 5'-nucleotidase SurE (274 aa).

A divalent metal cation contacts are provided by aspartate 12, aspartate 13, serine 45, and asparagine 103.

This sequence belongs to the SurE nucleotidase family. A divalent metal cation is required as a cofactor.

The protein localises to the cytoplasm. It carries out the reaction a ribonucleoside 5'-phosphate + H2O = a ribonucleoside + phosphate. Functionally, nucleotidase that shows phosphatase activity on nucleoside 5'-monophosphates. The polypeptide is 5'-nucleotidase SurE (Chlamydia felis (strain Fe/C-56) (Chlamydophila felis)).